A 123-amino-acid polypeptide reads, in one-letter code: Large ribosomal subunit protein bL17 (123 aa).

This sequence belongs to the bacterial ribosomal protein bL17 family. Part of the 50S ribosomal subunit. Contacts protein L32.

This Borreliella burgdorferi (strain ATCC 35210 / DSM 4680 / CIP 102532 / B31) (Borrelia burgdorferi) protein is Large ribosomal subunit protein bL17.